The primary structure comprises 438 residues: sn-glycerol-3-phosphate-binding periplasmic protein UgpB (438 aa).

The N-terminal stretch at 1–23 (MISLRHTALGLALSLAFTGQALA) is a signal peptide. 7 residues coordinate sn-glycerol 3-phosphate: Tyr65, Glu89, Ser144, Ser270, Gly307, Tyr346, and Arg397.

Belongs to the bacterial solute-binding protein 1 family. As to quaternary structure, the complex is composed of two ATP-binding proteins (UgpC), two transmembrane proteins (UgpA and UgpE) and a solute-binding protein (UgpB).

It is found in the periplasm. In terms of biological role, part of the ABC transporter complex UgpBAEC involved in sn-glycerol-3-phosphate (G3P) import. Binds G3P. This Salmonella paratyphi A (strain ATCC 9150 / SARB42) protein is sn-glycerol-3-phosphate-binding periplasmic protein UgpB (ugpB).